The following is a 236-amino-acid chain: UPF0257 lipoprotein YnfC (236 aa).

The signal sequence occupies residues 1–16 (MKYKLLPCLLAILLTG). A lipid anchor (N-palmitoyl cysteine) is attached at cysteine 17. The S-diacylglycerol cysteine moiety is linked to residue cysteine 17.

Belongs to the UPF0257 family.

Its subcellular location is the cell membrane. The sequence is that of UPF0257 lipoprotein YnfC from Escherichia coli O81 (strain ED1a).